A 159-amino-acid polypeptide reads, in one-letter code: Ribosomal RNA large subunit methyltransferase H (159 aa).

Residues glycine 108 and 127-132 (FGKLTM) each bind S-adenosyl-L-methionine.

The protein belongs to the RNA methyltransferase RlmH family. Homodimer.

The protein resides in the cytoplasm. It catalyses the reaction pseudouridine(1915) in 23S rRNA + S-adenosyl-L-methionine = N(3)-methylpseudouridine(1915) in 23S rRNA + S-adenosyl-L-homocysteine + H(+). Specifically methylates the pseudouridine at position 1915 (m3Psi1915) in 23S rRNA. In Lactobacillus helveticus (strain DPC 4571), this protein is Ribosomal RNA large subunit methyltransferase H.